Here is a 264-residue protein sequence, read N- to C-terminus: Triosephosphate isomerase (264 aa).

Position 13–15 (Asn-13–Lys-15) interacts with substrate. Catalysis depends on His-106, which acts as the Electrophile. The active-site Proton acceptor is the Glu-179. Substrate contacts are provided by residues Gly-185, Ser-223, and Gly-244–Gly-245.

It belongs to the triosephosphate isomerase family. Homodimer.

It localises to the cytoplasm. The enzyme catalyses D-glyceraldehyde 3-phosphate = dihydroxyacetone phosphate. It functions in the pathway carbohydrate biosynthesis; gluconeogenesis. Its pathway is carbohydrate degradation; glycolysis; D-glyceraldehyde 3-phosphate from glycerone phosphate: step 1/1. Functionally, involved in the gluconeogenesis. Catalyzes stereospecifically the conversion of dihydroxyacetone phosphate (DHAP) to D-glyceraldehyde-3-phosphate (G3P). The protein is Triosephosphate isomerase of Acinetobacter baumannii (strain SDF).